A 183-amino-acid chain; its full sequence is MTATAQQLEFLKNSIKSIQDYPKPGILFRDVTSLLEDPKAYALSIELLVERYKNAGITKVVGTEARGFLFGAPVALGLGVGFVPVRKPRKLPRETIAETYELEYGTDQLEIHVDAIKPGDNVLVVDDLLATGGTIEATVKLIRRLGGKVTDAAFIINLFDLGGEQRLEKQGITCYSLVPFPGH.

This sequence belongs to the purine/pyrimidine phosphoribosyltransferase family. As to quaternary structure, homodimer.

It is found in the cytoplasm. It catalyses the reaction AMP + diphosphate = 5-phospho-alpha-D-ribose 1-diphosphate + adenine. The protein operates within purine metabolism; AMP biosynthesis via salvage pathway; AMP from adenine: step 1/1. Functionally, catalyzes a salvage reaction resulting in the formation of AMP, that is energically less costly than de novo synthesis. This Salmonella paratyphi C (strain RKS4594) protein is Adenine phosphoribosyltransferase.